The primary structure comprises 662 residues: DNA topoisomerase 4 subunit B (662 aa).

ATP contacts are provided by residues Tyr20, Asn60, Asp87, 129–135 (GLHGVGI), and Lys359. One can recognise a Toprim domain in the interval 439 to 553 (TELFIVEGDS…EGHLYLAKPP (115 aa)). Mg(2+) is bound by residues Glu445, Asp518, and Asp520.

This sequence belongs to the type II topoisomerase family. ParE type 1 subfamily. Heterotetramer composed of ParC and ParE. It depends on Mg(2+) as a cofactor. Mn(2+) is required as a cofactor. The cofactor is Ca(2+).

The catalysed reaction is ATP-dependent breakage, passage and rejoining of double-stranded DNA.. Its function is as follows. Topoisomerase IV is essential for chromosome segregation. It relaxes supercoiled DNA. Performs the decatenation events required during the replication of a circular DNA molecule. This Rickettsia conorii (strain ATCC VR-613 / Malish 7) protein is DNA topoisomerase 4 subunit B.